Reading from the N-terminus, the 572-residue chain is DNA polymerase (572 aa).

The 3'-5' exonuclease and strand displacement activities stretch occupies residues 1–222 (MPRKMFSCDF…LPMDKEIRRA (222 aa)). An interaction with the primer terminal protein region spans residues 56–66 (YFHNLKFDGAF). 2 residues coordinate Mg(2+): aspartate 142 and aspartate 166. Residues 223 to 226 (YRGG) form a DNA-binding; Involved in the formation of a stable complex between TP and phi29 DNA polymerase region. Residues 227–572 (FTWLNDKYKE…VLVDSVFTIK (346 aa)) form an initiation, polymerization and pyrophosphorolytic activities region. Aspartate 246 and valine 247 together coordinate Mg(2+). 5-methyl-UTP contacts are provided by tyrosine 251, lysine 368, and lysine 380. Mg(2+) contacts are provided by aspartate 453 and aspartate 455. Aspartate 455 is a binding site for 5-methyl-UTP.

It belongs to the DNA polymerase type-B family. As to quaternary structure, interacts with the primer terminal protein; this interaction allows the initiation of TP-primed DNA replication at both viral DNA ends. Interacts with DNA. Requires Mg(2+) as cofactor.

The catalysed reaction is DNA(n) + a 2'-deoxyribonucleoside 5'-triphosphate = DNA(n+1) + diphosphate. Polymerase responsible for protein-primed viral DNA replication by strand displacement with high processivity and fidelity. To start replication, the DNA polymerase forms a heterodimer with a free primer terminal protein (TP), recognizes the replication origins at both 5' ends of the linear chromosome, and initiates replication using as primer the OH-group of Ser-232 of the TP. This polymerase possesses three enzymatic activities: DNA synthesis (polymerase), primer terminal protein (TP) deoxynucleotidylation, which is the formation of a covalent linkage (phosphoester) between the hydroxyl group of a specific serine residue in TP and 5'-dAMP, a reaction directed by the second T at the 3' end, and 3' to 5' exonuclease activity. Exonuclease activity has a proofreading purpose. The protein is DNA polymerase (2) of Bacillus phage B103 (Bacteriophage B103).